A 199-amino-acid polypeptide reads, in one-letter code: Glycerol-3-phosphate acyltransferase (199 aa).

The next 5 helical transmembrane spans lie at 4-24 (FALF…AILI), 56-76 (LAVL…GYYL), 80-100 (QFEL…PIFF), 115-135 (IAPI…FVFL), and 154-176 (YVWW…LIYR).

It belongs to the PlsY family. As to quaternary structure, probably interacts with PlsX.

The protein resides in the cell inner membrane. It catalyses the reaction an acyl phosphate + sn-glycerol 3-phosphate = a 1-acyl-sn-glycero-3-phosphate + phosphate. The protein operates within lipid metabolism; phospholipid metabolism. Functionally, catalyzes the transfer of an acyl group from acyl-phosphate (acyl-PO(4)) to glycerol-3-phosphate (G3P) to form lysophosphatidic acid (LPA). This enzyme utilizes acyl-phosphate as fatty acyl donor, but not acyl-CoA or acyl-ACP. The chain is Glycerol-3-phosphate acyltransferase from Haemophilus influenzae (strain PittGG).